The following is a 418-amino-acid chain: AP-3 complex subunit mu-1 (418 aa).

In terms of domain architecture, MHD spans 176 to 417 (NNEAYFDVVE…VTKAGKFQVR (242 aa)).

This sequence belongs to the adaptor complexes medium subunit family. As to quaternary structure, adaptor protein complex 3 (AP-3) is a heterotetramer composed of two large adaptins (delta-type subunit AP3D1 and beta-type subunit AP3B1 or AP3B2), a medium adaptin (mu-type subunit AP3M1 or AP3M2) and a small adaptin (sigma-type subunit APS1 or AP3S2). Interacts with AGAP1. AP-3 associates with the BLOC-1 complex.

It is found in the golgi apparatus. Its subcellular location is the cytoplasmic vesicle membrane. In terms of biological role, part of the AP-3 complex, an adaptor-related complex which is not clathrin-associated. The complex is associated with the Golgi region as well as more peripheral structures. It facilitates the budding of vesicles from the Golgi membrane and may be directly involved in trafficking to lysosomes. In concert with the BLOC-1 complex, AP-3 is required to target cargos into vesicles assembled at cell bodies for delivery into neurites and nerve terminals. In Bos taurus (Bovine), this protein is AP-3 complex subunit mu-1 (AP3M1).